The sequence spans 83 residues: RNA-binding protein Hfq (83 aa).

Residues 11–71 enclose the Sm domain; that stretch reads DTFLNHVRKN…ISTIMPGHPV (61 aa).

The protein belongs to the Hfq family. Homohexamer.

In terms of biological role, RNA chaperone that binds small regulatory RNA (sRNAs) and mRNAs to facilitate mRNA translational regulation in response to envelope stress, environmental stress and changes in metabolite concentrations. Also binds with high specificity to tRNAs. The protein is RNA-binding protein Hfq of Methylobacterium radiotolerans (strain ATCC 27329 / DSM 1819 / JCM 2831 / NBRC 15690 / NCIMB 10815 / 0-1).